A 61-amino-acid chain; its full sequence is Ferredoxin-2 (61 aa).

2 4Fe-4S ferredoxin-type domains span residues 2–27 (HRIT…SAGD) and 28–61 (EIYI…IIKV). Residues Cys-8, Cys-11, Cys-14, Cys-18, Cys-37, Cys-40, Cys-49, and Cys-53 each contribute to the [4Fe-4S] cluster site.

The cofactor is [4Fe-4S] cluster.

Its function is as follows. Ferredoxins are iron-sulfur proteins that transfer electrons in a wide variety of metabolic reactions. This is Ferredoxin-2 from Chlorobium limicola.